We begin with the raw amino-acid sequence, 174 residues long: RNA pyrophosphohydrolase (174 aa).

One can recognise a Nudix hydrolase domain in the interval 6–150; the sequence is GFRPNVGIVI…KREVYRRVMK (145 aa). Residues 38 to 59 carry the Nudix box motif; that stretch reads GGVDDGETPEQAMFRELYEEIG.

Belongs to the Nudix hydrolase family. RppH subfamily. It depends on a divalent metal cation as a cofactor.

In terms of biological role, accelerates the degradation of transcripts by removing pyrophosphate from the 5'-end of triphosphorylated RNA, leading to a more labile monophosphorylated state that can stimulate subsequent ribonuclease cleavage. The chain is RNA pyrophosphohydrolase from Tolumonas auensis (strain DSM 9187 / NBRC 110442 / TA 4).